The sequence spans 232 residues: Phosphoglycolate phosphatase (232 aa).

D8 acts as the Nucleophile in catalysis. The Mg(2+) site is built by D8 and D10. K155 is a substrate binding site. Residues D178 and D182 each coordinate Mg(2+).

Belongs to the archaeal SPP-like hydrolase family. The cofactor is Mg(2+).

It carries out the reaction 2-phosphoglycolate + H2O = glycolate + phosphate. Catalyzes the dephosphorylation of 2-phosphoglycolate. In Methanospirillum hungatei JF-1 (strain ATCC 27890 / DSM 864 / NBRC 100397 / JF-1), this protein is Phosphoglycolate phosphatase.